The sequence spans 34 residues: Photosystem II reaction center protein T (34 aa).

Residues 3 to 23 (ALVYTFLLVSTLGIIFFAIFF) form a helical membrane-spanning segment.

This sequence belongs to the PsbT family. PSII is composed of 1 copy each of membrane proteins PsbA, PsbB, PsbC, PsbD, PsbE, PsbF, PsbH, PsbI, PsbJ, PsbK, PsbL, PsbM, PsbT, PsbY, PsbZ, Psb30/Ycf12, at least 3 peripheral proteins of the oxygen-evolving complex and a large number of cofactors. It forms dimeric complexes.

It is found in the plastid. The protein localises to the chloroplast thylakoid membrane. Its function is as follows. Found at the monomer-monomer interface of the photosystem II (PS II) dimer, plays a role in assembly and dimerization of PSII. PSII is a light-driven water plastoquinone oxidoreductase, using light energy to abstract electrons from H(2)O, generating a proton gradient subsequently used for ATP formation. The sequence is that of Photosystem II reaction center protein T from Atropa belladonna (Belladonna).